The sequence spans 93 residues: Small ribosomal subunit protein uS19 (93 aa).

It belongs to the universal ribosomal protein uS19 family.

Protein S19 forms a complex with S13 that binds strongly to the 16S ribosomal RNA. The sequence is that of Small ribosomal subunit protein uS19 from Lawsonia intracellularis (strain PHE/MN1-00).